A 116-amino-acid chain; its full sequence is Protein Wnt-5b (116 aa).

The O-palmitoleoyl serine; by PORCN moiety is linked to residue Ser-1. 2 N-linked (GlcNAc...) asparagine glycosylation sites follow: Asn-69 and Asn-83. Cys-82 and Cys-97 form a disulfide bridge.

The protein belongs to the Wnt family. Palmitoleoylation is required for efficient binding to frizzled receptors. Depalmitoleoylation leads to Wnt signaling pathway inhibition.

The protein localises to the secreted. It is found in the extracellular space. It localises to the extracellular matrix. In terms of biological role, ligand for members of the frizzled family of seven transmembrane receptors. Probable developmental protein. May be a signaling molecule which affects the development of discrete regions of tissues. Is likely to signal over only few cell diameters. This is Protein Wnt-5b (WNT-5B) from Alopias vulpinus (Common thresher shark).